A 253-amino-acid chain; its full sequence is tRNA1(Val) (adenine(37)-N6)-methyltransferase (253 aa).

This sequence belongs to the methyltransferase superfamily. tRNA (adenine-N(6)-)-methyltransferase family.

It localises to the cytoplasm. It catalyses the reaction adenosine(37) in tRNA1(Val) + S-adenosyl-L-methionine = N(6)-methyladenosine(37) in tRNA1(Val) + S-adenosyl-L-homocysteine + H(+). Specifically methylates the adenine in position 37 of tRNA(1)(Val) (anticodon cmo5UAC). The polypeptide is tRNA1(Val) (adenine(37)-N6)-methyltransferase (Dickeya chrysanthemi (strain Ech1591) (Dickeya zeae (strain Ech1591))).